The following is a 615-amino-acid chain: Putative binding protein BRA0576/BS1330_II0571 (615 aa).

A signal peptide spans 1–29; it reads MLNRFIAFFRSVFLIGLVATAFGALPARA.

This sequence belongs to the bacterial solute-binding protein 5 family.

It is found in the periplasm. The protein is Putative binding protein BRA0576/BS1330_II0571 of Brucella suis biovar 1 (strain 1330).